Consider the following 76-residue polypeptide: MFNMKKSLLLLFFLGTISLSLCEEERDADEDDGVEMTEEEVKRSLLDTFKNLAVNAAKSAGVSVLNALSCKISRTC.

A signal peptide spans 1 to 22 (MFNMKKSLLLLFFLGTISLSLC). Positions 23 to 41 (EEERDADEDDGVEMTEEEV) are cleaved as a propeptide — removed in mature form. A disulfide bond links C70 and C76.

Expressed by the skin glands.

Its subcellular location is the secreted. Functionally, has antimicrobial activity against Gram-negative bacterium E.coli ATCC 8739 (MIC=50 ug), against Gram positive bacteria S.aureus ATCC 6538 (MIC=12.5 ug), methicillin-resistant S.aureus ATCC 43300 (MIC=100 ug) and B.subtilis ATCC 6633 (MIC=12.5 ug). Has no activity against fungus C.albicans ATCC 90028. The sequence is that of Brevinin-2ISa from Odorrana ishikawae (Ishikawa's frog).